Reading from the N-terminus, the 193-residue chain is DNA damage-inducible transcript 4-like protein (193 aa).

This sequence belongs to the DDIT4 family.

Its subcellular location is the cytoplasm. Functionally, inhibits cell growth by regulating the TOR signaling pathway upstream of the TSC1-TSC2 complex and downstream of AKT1. This chain is DNA damage-inducible transcript 4-like protein (Ddit4l), found in Mus musculus (Mouse).